The chain runs to 379 residues: Putative phosphatidate phosphatase (379 aa).

Positions 1 to 53 (MPAVKIIMSTETSASETTPLRRSENETPDHKELAQSNSNSRQTTVNSNNNNYS) are disordered. Over residues 9 to 18 (STETSASETT) the composition is skewed to polar residues. The span at 19–33 (PLRRSENETPDHKEL) shows a compositional bias: basic and acidic residues. The span at 35–53 (QSNSNSRQTTVNSNNNNYS) shows a compositional bias: low complexity. Residue asparagine 51 is glycosylated (N-linked (GlcNAc...) asparagine). The next 2 helical transmembrane spans lie at 90–110 (VGLD…FFLL) and 138–158 (MLYF…EVII). Asparagine 169 is a glycosylation site (N-linked (GlcNAc...) asparagine). 2 consecutive transmembrane segments (helical) span residues 266–286 (SFPS…ALYL) and 330–350 (AGSL…SDLF).

Belongs to the PA-phosphatase related phosphoesterase family. Homodimer. This complex seems not to be involved in substrate recognition, it may confer only structural or functional stability. As to expression, expressed in embryonic gut in a pattern that guides germ cells towards mesoderm (initially in hindgut and then on lower side of gut). During extended germ band stage, expressed in ectoderm as a medial band throughout the trunk.

It is found in the membrane. It catalyses the reaction a 1,2-diacyl-sn-glycero-3-phosphate + H2O = a 1,2-diacyl-sn-glycerol + phosphate. In terms of biological role, responsible for guiding the germ cells early in the process of migration from the lumen of the developing gut towards the overlying mesoderm, where the germ cells enter the gonads. May be involved in lipid metabolism. The chain is Putative phosphatidate phosphatase (wun) from Drosophila melanogaster (Fruit fly).